Here is an 867-residue protein sequence, read N- to C-terminus: Cation/H(+) antiporter 23, chloroplastic (867 aa).

12 helical membrane-spanning segments follow: residues 43–63 (SGST…VANL), 75–95 (LYLP…PSVL), 112–132 (MVLE…LGLG), 146–166 (VIIA…LYYL), 175–195 (IISG…PDLA), 212–232 (AMCA…FGFA), 242–262 (KMMP…IFVI), 283–303 (HVWF…ACGV), 336–356 (GILM…GFML), 362–382 (FMMV…TVIT), 393–413 (AFAI…VLNA), and 427–447 (HMTI…AFAY). The disordered stretch occupies residues 848–867 (SMYEDEDEDDEEDHQYGIHR). Acidic residues predominate over residues 851 to 860 (EDEDEDDEED).

It belongs to the monovalent cation:proton antiporter 2 (CPA2) transporter (TC 2.A.37) family. CHX (TC 2.A.37.4) subfamily. In terms of tissue distribution, specifically expressed in flower buds and pollen. Expressed in leaves, roots and stems.

It is found in the plastid. The protein resides in the chloroplast membrane. The protein localises to the endoplasmic reticulum membrane. In terms of biological role, operates as a K(+)/H(+) antiporter or Na(+)/H(+) antiporter of the chloroplast envelope that functions in pH homeostasis and chloroplast development. Monovalent cation transporter with a preference for Cs(+), K(+) and Rb(+) relative to Na(+) or Li(+). Required for pollen tube guidance, but not for normal pollen development. May also be involved in the development or function of the female gametophyte. The sequence is that of Cation/H(+) antiporter 23, chloroplastic (CHX23) from Arabidopsis thaliana (Mouse-ear cress).